Here is a 147-residue protein sequence, read N- to C-terminus: Ribonuclease 4 (147 aa).

Residues 1–28 (MALQRTHSLLLLLLLTLLGLGLVQPSYG) form the signal peptide. Position 29 is a pyrrolidone carboxylic acid (Q29). DUMP contacts are provided by R35, H40, K68, N71, and T72. H40 serves as the catalytic Proton acceptor. Disulfide bonds link C53-C109, C67-C120, C85-C135, and C92-C99. Residue H144 is the Proton donor of the active site. Position 145 (F145) interacts with dUMP.

Belongs to the pancreatic ribonuclease family.

It localises to the secreted. Functionally, cleaves preferentially after uridine bases. Has antimicrobial activity against uropathogenic E.coli (UPEC). Probably contributes to urinary tract sterility. This is Ribonuclease 4 (RNASE4) from Pan troglodytes (Chimpanzee).